A 605-amino-acid polypeptide reads, in one-letter code: Replication protein E1 (605 aa).

A Nuclear localization signal motif is present at residues 84–86 (KRK). Phosphoserine; by host occurs at positions 90 and 94. The segment covering 90–101 (SSQNSSGSEASE) has biased composition (low complexity). The tract at residues 90–112 (SSQNSSGSEASETPVKRRKSGAK) is disordered. Thr-102 is subject to Phosphothreonine; by host CDK1. The Nuclear localization signal signature appears at 105–108 (KRRK). Ser-109 carries the phosphoserine; by host modification. A DNA-binding region region spans residues 142–308 (EEQAISHLHL…QTTLNESLQT (167 aa)). The 151-residue stretch at 407–557 (IELITFINAL…CTDESGEQPF (151 aa)) folds into the SF3 helicase domain. 433-440 (GPPNTGKS) lines the ATP pocket. Lys-514 is covalently cross-linked (Glycyl lysine isopeptide (Lys-Gly) (interchain with G-Cter in SUMO)). The segment at 582-605 (EDSEEDGDSMRTFTCSARNTNAVD) is disordered. Polar residues predominate over residues 592–605 (RTFTCSARNTNAVD).

The protein belongs to the papillomaviridae E1 protein family. In terms of assembly, can form hexamers. Interacts with E2 protein; this interaction increases E1 DNA binding specificity. Interacts with host DNA polymerase subunit POLA2. Interacts with host single stranded DNA-binding protein RPA1. Interacts with host TOP1; this interaction stimulates the enzymatic activity of TOP1. Post-translationally, phosphorylated. Probably phosphorylated by host PKA and PKC at Ser-109. Phosphorylated by host CDK1 at Thr-102. Phosphorylated. In terms of processing, sumoylated.

Its subcellular location is the host nucleus. The catalysed reaction is Couples ATP hydrolysis with the unwinding of duplex DNA by translocating in the 3'-5' direction.. It catalyses the reaction ATP + H2O = ADP + phosphate + H(+). In terms of biological role, ATP-dependent DNA 3'-5' helicase required for initiation of viral DNA replication. It forms a complex with the viral E2 protein. The E1-E2 complex binds to the replication origin which contains binding sites for both proteins. During the initial step, a dimer of E1 interacts with a dimer of protein E2 leading to a complex that binds the viral origin of replication with high specificity. Then, a second dimer of E1 displaces the E2 dimer in an ATP-dependent manner to form the E1 tetramer. Following this, two E1 monomers are added to each half of the site, which results in the formation of two E1 trimers on the viral ori. Subsequently, two hexamers will be created. The double hexamer acts as a bi-directional helicase machinery and unwinds the viral DNA and then recruits the host DNA polymerase to start replication. This is Replication protein E1 from Bovine papillomavirus type 1.